Reading from the N-terminus, the 468-residue chain is Siroheme synthase (468 aa).

A precorrin-2 dehydrogenase /sirohydrochlorin ferrochelatase region spans residues Met1 to Leu203. NAD(+)-binding positions include Thr22–Val23 and Pro43–Lys44. Ser128 is modified (phosphoserine). The interval Gly216–Arg468 is uroporphyrinogen-III C-methyltransferase. Pro225 is an S-adenosyl-L-methionine binding site. The Proton acceptor role is filled by Asp248. The active-site Proton donor is the Lys270. S-adenosyl-L-methionine is bound by residues Gly301–Asp303, Ile306, Thr331–Ala332, Met383, and Gly412.

The protein in the N-terminal section; belongs to the precorrin-2 dehydrogenase / sirohydrochlorin ferrochelatase family. It in the C-terminal section; belongs to the precorrin methyltransferase family.

It catalyses the reaction uroporphyrinogen III + 2 S-adenosyl-L-methionine = precorrin-2 + 2 S-adenosyl-L-homocysteine + H(+). The enzyme catalyses precorrin-2 + NAD(+) = sirohydrochlorin + NADH + 2 H(+). It carries out the reaction siroheme + 2 H(+) = sirohydrochlorin + Fe(2+). It participates in cofactor biosynthesis; adenosylcobalamin biosynthesis; precorrin-2 from uroporphyrinogen III: step 1/1. Its pathway is cofactor biosynthesis; adenosylcobalamin biosynthesis; sirohydrochlorin from precorrin-2: step 1/1. The protein operates within porphyrin-containing compound metabolism; siroheme biosynthesis; precorrin-2 from uroporphyrinogen III: step 1/1. It functions in the pathway porphyrin-containing compound metabolism; siroheme biosynthesis; siroheme from sirohydrochlorin: step 1/1. It participates in porphyrin-containing compound metabolism; siroheme biosynthesis; sirohydrochlorin from precorrin-2: step 1/1. In terms of biological role, multifunctional enzyme that catalyzes the SAM-dependent methylations of uroporphyrinogen III at position C-2 and C-7 to form precorrin-2 via precorrin-1. Then it catalyzes the NAD-dependent ring dehydrogenation of precorrin-2 to yield sirohydrochlorin. Finally, it catalyzes the ferrochelation of sirohydrochlorin to yield siroheme. The polypeptide is Siroheme synthase (Nitrosococcus oceani (strain ATCC 19707 / BCRC 17464 / JCM 30415 / NCIMB 11848 / C-107)).